An 89-amino-acid polypeptide reads, in one-letter code: Small ribosomal subunit protein uS17 (89 aa).

The protein belongs to the universal ribosomal protein uS17 family. As to quaternary structure, part of the 30S ribosomal subunit.

In terms of biological role, one of the primary rRNA binding proteins, it binds specifically to the 5'-end of 16S ribosomal RNA. The sequence is that of Small ribosomal subunit protein uS17 from Chlorobaculum tepidum (strain ATCC 49652 / DSM 12025 / NBRC 103806 / TLS) (Chlorobium tepidum).